Consider the following 466-residue polypeptide: 3-isopropylmalate dehydratase large subunit (466 aa).

C347, C407, and C410 together coordinate [4Fe-4S] cluster.

Belongs to the aconitase/IPM isomerase family. LeuC type 1 subfamily. In terms of assembly, heterodimer of LeuC and LeuD. [4Fe-4S] cluster serves as cofactor.

It catalyses the reaction (2R,3S)-3-isopropylmalate = (2S)-2-isopropylmalate. It participates in amino-acid biosynthesis; L-leucine biosynthesis; L-leucine from 3-methyl-2-oxobutanoate: step 2/4. In terms of biological role, catalyzes the isomerization between 2-isopropylmalate and 3-isopropylmalate, via the formation of 2-isopropylmaleate. This Vibrio campbellii (strain ATCC BAA-1116) protein is 3-isopropylmalate dehydratase large subunit.